A 519-amino-acid chain; its full sequence is Laccase-2 (519 aa).

An N-terminal signal peptide occupies residues 1–20 (MGLQRFSFFVTLALVARSLA). Plastocyanin-like domains are found at residues 22-147 (IGPV…FVVY) and 159-301 (VDNE…ILRY). N-linked (GlcNAc...) asparagine glycosylation is present at N74. H84, H86, H129, and H131 together coordinate Cu cation. Disulfide bonds link C105–C508 and C137–C225. N-linked (GlcNAc...) asparagine glycans are attached at residues N161, N228, N237, N271, N353, and N361. In terms of domain architecture, Plastocyanin-like 3 spans 368 to 490 (TVPVLLQILS…AGFAIVFAED (123 aa)). H415, H418, and H420 together coordinate Cu cation. N-linked (GlcNAc...) asparagine glycosylation occurs at N456. 4 residues coordinate Cu cation: H472, C473, H474, and H478.

It belongs to the multicopper oxidase family. Cu cation is required as a cofactor.

Its subcellular location is the secreted. The enzyme catalyses 4 hydroquinone + O2 = 4 benzosemiquinone + 2 H2O. Its function is as follows. Lignin degradation and detoxification of lignin-derived products. The chain is Laccase-2 (LCC2) from Trametes versicolor (White-rot fungus).